The following is a 648-amino-acid chain: Leucine-rich repeat transmembrane protein FLRT3 (648 aa).

The N-terminal stretch at 1–28 is a signal peptide; that stretch reads MSTETWNLFVAWAQLLLLFRISPQYVNA. Residues 29–527 are Extracellular-facing; sequence KPCPSVCRCD…KEPYKNSSLP (499 aa). An LRRNT domain is found at 30 to 62; that stretch reads PCPSVCRCDGGFIYCNDRDLTSIPSGIPDDATT. 2 disulfides stabilise this stretch: Cys31–Cys37 and Cys35–Cys44. LRR repeat units lie at residues 58–82, 83–105, 107–126, 127–152, 154–179, 181–197, 198–223, 225–246, 247–269, and 270–293; these read DDAT…LRGL, DKVE…LPKN, KELH…ALSQ, IPSI…AFRD, IFLR…TIEE, RLDD…SLQD, LTNL…VFMN, INLT…NLPG, TNLR…AFAD, and LTQL…IFDD. The N-linked (GlcNAc...) asparagine glycan is linked to Asn226. An LRRCT domain is found at 305 to 356; it reads NPWYCGCKMKWVRDWLQSLPSKVNVRGLMCQAPERVRGMTIKDLNKELFDCK. A disulfide bond links Cys309 and Cys334. The Fibronectin type-III domain occupies 409–503; the sequence is KIITIQVKSI…VCIETETAPL (95 aa). Residues 528 to 548 traverse the membrane as a helical segment; sequence LAAIIGGAVALVAITLLALVC. The Cytoplasmic portion of the chain corresponds to 549-648; sequence WYVHRNGSLF…GIPDSDHSHS (100 aa). The span at 624 to 633 shows a compositional bias: low complexity; it reads NSHSESSSNR. The tract at residues 624 to 648 is disordered; that stretch reads NSHSESSSNRSYRDSGIPDSDHSHS.

As to quaternary structure, interacts with fgfr1 and fgfr4. Interacts with rnd1, cdh1 and pcdh8. Interacts (via extracellular domain) with unc5b and unc5d (via extracellular domain). Post-translationally, N-glycosylated. In terms of processing, proteolytic cleavage in the juxtamembrane region gives rise to a soluble ectodomain. Cleavage is probably effected by a metalloprotease.

It localises to the cell membrane. The protein localises to the endoplasmic reticulum membrane. The protein resides in the cell junction. It is found in the focal adhesion. Its subcellular location is the secreted. It localises to the cell projection. The protein localises to the axon. The protein resides in the growth cone membrane. Functions in cell-cell adhesion, cell migration and axon guidance, exerting an attractive or repulsive role depending on its interaction partners. Modulates cadherin-dependent cell-cell adhesion and cell sorting. Plays a role in the spatial organization of brain neurons. Plays a role in vascular development. Plays a role in cell-cell adhesion via its interaction with latrophilins that are expressed at the surface of adjacent cells. Mediates axon attraction towards cells expressing ntn1. mediates axon growth cone collapse and plays a repulsive role in neuron guidance via its interaction with unc-5 family members. Plays a role in the regulation of the density of glutamaergic synapses. Plays a role in signaling cascades downstream of fgfr1, and possibly also other fgfr family members. Plays a role in embryonic morphogenesis, but not in embryonic patterning. The polypeptide is Leucine-rich repeat transmembrane protein FLRT3 (Xenopus tropicalis (Western clawed frog)).